The sequence spans 603 residues: Polypeptide N-acetylgalactosaminyltransferase 10 (603 aa).

The Cytoplasmic segment spans residues M1–A11. Residues V12–Y31 traverse the membrane as a helical; Signal-anchor for type II membrane protein segment. The Lumenal portion of the chain corresponds to R32–N603. 2 N-linked (GlcNAc...) asparagine glycosylation sites follow: N124 and N146. 5 disulfides stabilise this stretch: C135/C365, C356/C432, C471/C488, C523/C538, and C563/C578. The segment at L144 to R253 is catalytic subdomain A. Substrate contacts are provided by D185 and R214. D237 contributes to the Mn(2+) binding site. S238 lines the substrate pocket. Position 239 (H239) interacts with Mn(2+). A catalytic subdomain B region spans residues P311 to R373. W342 lines the substrate pocket. H370 provides a ligand contact to Mn(2+). Substrate-binding residues include R373 and Y378. A flexible loop region spans residues R373–V384. Positions A458 to E590 constitute a Ricin B-type lectin domain. Residue N593 is glycosylated (N-linked (GlcNAc...) asparagine).

It belongs to the glycosyltransferase 2 family. GalNAc-T subfamily. Mn(2+) serves as cofactor. Highly expressed in the sublingual gland, testis, small intestine, colon and ovary. Expressed at intermediate level in heart, brain, spleen, lung, stomach, cervix and uterus.

The protein resides in the golgi apparatus membrane. It catalyses the reaction L-seryl-[protein] + UDP-N-acetyl-alpha-D-galactosamine = a 3-O-[N-acetyl-alpha-D-galactosaminyl]-L-seryl-[protein] + UDP + H(+). It carries out the reaction L-threonyl-[protein] + UDP-N-acetyl-alpha-D-galactosamine = a 3-O-[N-acetyl-alpha-D-galactosaminyl]-L-threonyl-[protein] + UDP + H(+). It functions in the pathway protein modification; protein glycosylation. Its function is as follows. Catalyzes the initial reaction in O-linked oligosaccharide biosynthesis, the transfer of an N-acetyl-D-galactosamine residue to a serine or threonine residue on the protein receptor. Has activity toward Muc5Ac and EA2 peptide substrates. The protein is Polypeptide N-acetylgalactosaminyltransferase 10 (Galnt10) of Rattus norvegicus (Rat).